We begin with the raw amino-acid sequence, 86 residues long: Triple QxxK/R motif-containing protein (86 aa).

Residues 51–71 (VGLVLAAILALLLAFYAFFYL) form a helical membrane-spanning segment.

The protein belongs to the TRIQK family.

It is found in the endoplasmic reticulum membrane. May play a role in cell growth and maintenance of cell morphology. The protein is Triple QxxK/R motif-containing protein (TRIQK) of Pongo abelii (Sumatran orangutan).